We begin with the raw amino-acid sequence, 274 residues long: Large ribosomal subunit protein uL2cz/uL2cy (274 aa).

Disordered regions lie at residues methionine 1–valine 22 and proline 225–lysine 274.

It belongs to the universal ribosomal protein uL2 family. Part of the 50S ribosomal subunit.

Its subcellular location is the plastid. It localises to the chloroplast. The protein is Large ribosomal subunit protein uL2cz/uL2cy (rpl2-A) of Nasturtium officinale (Watercress).